Consider the following 888-residue polypeptide: Translation initiation factor IF-2 (888 aa).

2 disordered regions span residues 96–122 (TTKQDESDAAGKRAAEDVSLRTAEAPE) and 158–302 (ELKE…SAPT). 2 stretches are compositionally biased toward basic and acidic residues: residues 98 to 114 (KQDESDAAGKRAAEDVS) and 158 to 167 (ELKEKQEKRR). Positions 181 to 206 (TQVQEPGSETAAVSGSVAATQPESTE) are enriched in polar residues. Over residues 207–225 (TAAVTPSATITVTTQTTPA) the composition is skewed to low complexity. Basic and acidic residues-rich tracts occupy residues 226–243 (AKERAPQKPAVKPEEKGE) and 253–269 (EAWKDEPVKRRESKARG). The region spanning 390–559 (SRAPVVTVMG…LLQAEVLELK (170 aa)) is the tr-type G domain. The tract at residues 399 to 406 (GHVDHGKT) is G1. Residue 399-406 (GHVDHGKT) participates in GTP binding. Residues 424–428 (GITQH) are G2. The segment at 445 to 448 (DTPG) is G3. Residues 445–449 (DTPGH) and 499–502 (NKMD) each bind GTP. Residues 499–502 (NKMD) are G4. Residues 535–537 (SAK) form a G5 region.

The protein belongs to the TRAFAC class translation factor GTPase superfamily. Classic translation factor GTPase family. IF-2 subfamily.

Its subcellular location is the cytoplasm. Functionally, one of the essential components for the initiation of protein synthesis. Protects formylmethionyl-tRNA from spontaneous hydrolysis and promotes its binding to the 30S ribosomal subunits. Also involved in the hydrolysis of GTP during the formation of the 70S ribosomal complex. This is Translation initiation factor IF-2 from Nitrosomonas eutropha (strain DSM 101675 / C91 / Nm57).